The primary structure comprises 397 residues: MASEGITEIDSGLIESNYDNVVYKFDDLNLKPNIVRGIFGYGYETPSAIQQRAILPITEGRDVLAQAQSGTGKTATFTISALQRIDENEKSTQALILAPTRELALQIKNVITSIGLYLNVTVHASIGGTSMSDDIEAFKSGVQIVVGTPGRVFDMIERRYFRTDKVKMFILDEADEMLSSGFKEQIYNIFRLLPETTQVVLLSATMPQDVLEVTTKFMNNPVRILVKKDELTLEGIKQYFINVEVEDYKFDCLVDLYDSISVTQAVIFCNTRSKVEFLTNKLREQKFTVSAIHADLPQGERDTIMKEFRSGSSRILISTDLLARGIDVQQVSLVINYDLPANKENYIHRIGRGGRFGRKGVAINFVTDKDVGMMREIEKFYSTQITEMPADIGSLFA.

The Q motif motif lies at 23 to 51 (YKFDDLNLKPNIVRGIFGYGYETPSAIQQ). In terms of domain architecture, Helicase ATP-binding spans 54-224 (ILPITEGRDV…TKFMNNPVRI (171 aa)). 67 to 74 (AQSGTGKT) is a binding site for ATP. Positions 172–175 (DEAD) match the DEAD box motif. The region spanning 255 to 396 (DLYDSISVTQ…EMPADIGSLF (142 aa)) is the Helicase C-terminal domain.

The protein belongs to the DEAD box helicase family. eIF4A subfamily. Component of the eIF4F complex, which composition varies with external and internal environmental conditions. It is composed of at least eIF4A, eIF4E and eIF4G.

It is found in the cytoplasm. It catalyses the reaction ATP + H2O = ADP + phosphate + H(+). Functionally, ATP-dependent RNA helicase which is a subunit of the eIF4F complex involved in cap recognition and is required for mRNA binding to ribosome. In the current model of translation initiation, eIF4A unwinds RNA secondary structures in the 5'-UTR of mRNAs which is necessary to allow efficient binding of the small ribosomal subunit, and subsequent scanning for the initiator codon. This Lodderomyces elongisporus (strain ATCC 11503 / CBS 2605 / JCM 1781 / NBRC 1676 / NRRL YB-4239) (Yeast) protein is ATP-dependent RNA helicase eIF4A (TIF1).